The sequence spans 312 residues: Probable cell division protein WhiA (312 aa).

A DNA-binding region (H-T-H motif) is located at residues 274 to 308 (SLKELGTLVPGGPISKSGVNHRLRKLNAYADELRQ).

The protein belongs to the WhiA family.

Involved in cell division and chromosome segregation. This Limosilactobacillus fermentum (strain NBRC 3956 / LMG 18251) (Lactobacillus fermentum) protein is Probable cell division protein WhiA.